We begin with the raw amino-acid sequence, 931 residues long: Short transient receptor potential channel 6 (931 aa).

Residues Met1–Ala23 show a composition bias toward low complexity. The disordered stretch occupies residues Met1 to Asn26. Topologically, residues Met1–Gly438 are cytoplasmic. ANK repeat units follow at residues Ile97 to Val126, Met132 to Val161, Asp163 to Gly189, and His218 to Arg247. A helical transmembrane segment spans residues Pro439 to Met459. At Asn460–Lys487 the chain is on the extracellular side. Residue Asn473 is glycosylated (N-linked (GlcNAc...) asparagine). The helical transmembrane segment at Thr488–Ala508 threads the bilayer. Topologically, residues Glu509 to Tyr521 are cytoplasmic. The chain crosses the membrane as a helical span at residues Leu522–Ile542. Over Ala543–Gln592 the chain is Extracellular. Asn561 carries an N-linked (GlcNAc...) asparagine glycan. Residues Ile593–Ile613 traverse the membrane as a helical segment. Residues Leu614–Lys636 lie on the Cytoplasmic side of the membrane. Residues Phe637–Ser657 form a helical membrane-spanning segment. At Tyr658–Val706 the chain is on the extracellular side. Residues Leu707–Ile727 form a helical membrane-spanning segment. Over Asn728–Arg931 the chain is Cytoplasmic. Ser815 carries the phosphoserine modification.

Belongs to the transient receptor (TC 1.A.4) family. STrpC subfamily. TRPC6 sub-subfamily. Homodimer; forms channel complex. Interacts with MX1 and RNF24. Phosphorylated by FYN, leading to an increase of TRPC6 channel activity. As to expression, expressed primarily in placenta, lung, spleen, ovary and small intestine. Expressed in podocytes and is a component of the glomerular slit diaphragm.

It localises to the cell membrane. It carries out the reaction Ca(2+)(in) = Ca(2+)(out). With respect to regulation, activated by diacylglycerol (DAG) in a membrane-delimited fashion, independently of protein kinase C. Its function is as follows. Forms a receptor-activated non-selective calcium permeant cation channel. Probably is operated by a phosphatidylinositol second messenger system activated by receptor tyrosine kinases or G-protein coupled receptors. Activated by diacylglycerol (DAG) in a membrane-delimited fashion, independently of protein kinase C. Seems not to be activated by intracellular calcium store depletion. The protein is Short transient receptor potential channel 6 of Homo sapiens (Human).